We begin with the raw amino-acid sequence, 507 residues long: Phospho-2-dehydro-3-deoxyheptonate aldolase 2, chloroplastic (507 aa).

The protein belongs to the class-II DAHP synthase family.

The protein resides in the plastid. It is found in the chloroplast. It catalyses the reaction D-erythrose 4-phosphate + phosphoenolpyruvate + H2O = 7-phospho-2-dehydro-3-deoxy-D-arabino-heptonate + phosphate. The protein operates within metabolic intermediate biosynthesis; chorismate biosynthesis; chorismate from D-erythrose 4-phosphate and phosphoenolpyruvate: step 1/7. In Arabidopsis thaliana (Mouse-ear cress), this protein is Phospho-2-dehydro-3-deoxyheptonate aldolase 2, chloroplastic (DHS2).